The following is a 206-amino-acid chain: N-(5'-phosphoribosyl)anthranilate isomerase (206 aa).

This sequence belongs to the TrpF family.

The catalysed reaction is N-(5-phospho-beta-D-ribosyl)anthranilate = 1-(2-carboxyphenylamino)-1-deoxy-D-ribulose 5-phosphate. It participates in amino-acid biosynthesis; L-tryptophan biosynthesis; L-tryptophan from chorismate: step 3/5. The protein is N-(5'-phosphoribosyl)anthranilate isomerase of Pseudomonas syringae pv. syringae (strain B728a).